A 358-amino-acid polypeptide reads, in one-letter code: Guanidino acid hydrolase, mitochondrial (358 aa).

A mitochondrion-targeting transit peptide spans 1–36 (MLRLLRSSWARGLGSGVATWRPSAGLFRPGCPGIRQ). A disordered region spans residues 31–56 (CPGIRQASGASDTPHHQSPSSESPVQ). Low complexity predominate over residues 46-56 (HQSPSSESPVQ). Gln-168 and His-193 together coordinate Mn(2+). At Lys-199 the chain carries N6-acetyllysine. At Lys-223 the chain carries N6-acetyllysine; alternate. Lys-223 carries the N6-succinyllysine; alternate modification. A Mn(2+)-binding site is contributed by Asp-284.

This sequence belongs to the arginase family. Agmatinase subfamily. Requires Mn(2+) as cofactor. In terms of tissue distribution, detected only in liver.

The protein resides in the mitochondrion. It carries out the reaction 3-guanidinopropanoate + H2O = urea + beta-alanine. It catalyses the reaction 4-guanidinobutanoate + H2O = urea + 4-aminobutanoate. The catalysed reaction is taurocyamine + H2O = urea + taurine. The enzyme catalyses L-arginine + H2O = urea + L-ornithine. Its pathway is nitrogen metabolism; urea cycle; L-ornithine and urea from L-arginine: step 1/1. Functionally, hydrolyzes linear guanidino acids to form urea and the corresponding amines. Displays specificity for substrates having a negatively charged head group and short chains including taurocyamine, guanidino propanoic and butanoic acids. May protect cells by detoxifying potentially harmful amounts of guanidino acids. Metabolizes L-arginine with low efficiency. The sequence is that of Guanidino acid hydrolase, mitochondrial (Agmat) from Mus musculus (Mouse).